Consider the following 89-residue polypeptide: Small ribosomal subunit protein uS17 (89 aa).

The protein belongs to the universal ribosomal protein uS17 family. As to quaternary structure, part of the 30S ribosomal subunit.

One of the primary rRNA binding proteins, it binds specifically to the 5'-end of 16S ribosomal RNA. This Paracidovorax citrulli (strain AAC00-1) (Acidovorax citrulli) protein is Small ribosomal subunit protein uS17.